The sequence spans 527 residues: Type II methyltransferase M.XamI (527 aa).

Belongs to the N(4)/N(6)-methyltransferase family.

The enzyme catalyses a 2'-deoxyadenosine in DNA + S-adenosyl-L-methionine = an N(6)-methyl-2'-deoxyadenosine in DNA + S-adenosyl-L-homocysteine + H(+). Its function is as follows. A gamma subtype methylase that recognizes the double-stranded sequence 5'-GTCGAC-3', possibly methylates A-5 on both strands, and protects the DNA from cleavage by the XamI endonuclease. The sequence is that of Type II methyltransferase M.XamI from Xanthomonas campestris pv. amaranthicola.